Reading from the N-terminus, the 94-residue chain is Small ribosomal subunit protein bS6 (94 aa).

Belongs to the bacterial ribosomal protein bS6 family.

Functionally, binds together with bS18 to 16S ribosomal RNA. This chain is Small ribosomal subunit protein bS6, found in Desulforudis audaxviator (strain MP104C).